A 660-amino-acid chain; its full sequence is Poly [ADP-ribose] polymerase 2-A (660 aa).

An SAP 1 domain is found at 2-36 (SARLRVEELRAELQRRGLDASGNKPVLVRRLDAAI). A disordered region spans residues 40–92 (EEEEAAVSAAAKEEADAGGVVDGEGNGEDKRKRKRRGDGEDVDNSESDAAKLE). The Nuclear localization signal signature appears at 69–75 (KRKRKRR). Residues 91 to 125 (LEGMSYRELQALAKSRGLAANGSKKEVIERLLCAP) form the SAP 2 domain. One can recognise a WGR domain in the interval 179 to 281 (TYHVLQVWFL…KSFECYARKY (103 aa)). The 119-residue stretch at 308 to 426 (ETKLETRIAS…EIEIATKLLE (119 aa)) folds into the PARP alpha-helical domain. A PARP catalytic domain is found at 434–660 (DPLYARYKQL…LHVSFNFKKR (227 aa)).

This sequence belongs to the ARTD/PARP family.

It is found in the nucleus. It carries out the reaction NAD(+) + (ADP-D-ribosyl)n-acceptor = nicotinamide + (ADP-D-ribosyl)n+1-acceptor + H(+).. The enzyme catalyses L-aspartyl-[protein] + NAD(+) = 4-O-(ADP-D-ribosyl)-L-aspartyl-[protein] + nicotinamide. The catalysed reaction is L-glutamyl-[protein] + NAD(+) = 5-O-(ADP-D-ribosyl)-L-glutamyl-[protein] + nicotinamide. Its function is as follows. Involved in the base excision repair (BER) pathway, by catalyzing the poly(ADP-ribosyl)ation of a limited number of acceptor proteins involved in chromatin architecture and in DNA metabolism. This modification follows DNA damages and appears as an obligatory step in a detection/signaling pathway leading to the reparation of DNA strand breaks. This chain is Poly [ADP-ribose] polymerase 2-A (PARP2-A), found in Oryza sativa subsp. japonica (Rice).